Here is a 253-residue protein sequence, read N- to C-terminus: uncharacterized protein (253 aa).

It belongs to the A.longa ORF167/ORF288 family.

It is found in the plastid. This is an uncharacterized protein from Euglena longa (Euglenophycean alga).